The chain runs to 514 residues: Anthranilate synthase component 1 (514 aa).

L-tryptophan is bound by residues Thr40 and Pro290–Met292. Gly327–Thr328 contributes to the chorismate binding site. Residue Glu360 coordinates Mg(2+). Residues Tyr448, Arg468, Gly482–Gly484, and Gly484 contribute to the chorismate site. Glu497 is a Mg(2+) binding site.

It belongs to the anthranilate synthase component I family. In terms of assembly, heterotetramer consisting of two non-identical subunits: a beta subunit (TrpG) and a large alpha subunit (TrpE). It depends on Mg(2+) as a cofactor.

It catalyses the reaction chorismate + L-glutamine = anthranilate + pyruvate + L-glutamate + H(+). Its pathway is amino-acid biosynthesis; L-tryptophan biosynthesis; L-tryptophan from chorismate: step 1/5. Its activity is regulated as follows. Feedback inhibited by tryptophan. Its function is as follows. Part of a heterotetrameric complex that catalyzes the two-step biosynthesis of anthranilate, an intermediate in the biosynthesis of L-tryptophan. In the first step, the glutamine-binding beta subunit (TrpG) of anthranilate synthase (AS) provides the glutamine amidotransferase activity which generates ammonia as a substrate that, along with chorismate, is used in the second step, catalyzed by the large alpha subunit of AS (TrpE) to produce anthranilate. In the absence of TrpG, TrpE can synthesize anthranilate directly from chorismate and high concentrations of ammonia. The sequence is that of Anthranilate synthase component 1 (trpE) from Buchnera aphidicola subsp. Rhopalosiphum padi.